Here is a 165-residue protein sequence, read N- to C-terminus: Phosphopantetheine adenylyltransferase (165 aa).

Position 10 (Ser10) interacts with substrate. Residues 10–11 (SF) and His18 each bind ATP. 3 residues coordinate substrate: Lys42, Thr79, and Arg93. ATP contacts are provided by residues 94-96 (GLR), Glu104, and 129-135 (VRPITAT).

This sequence belongs to the bacterial CoaD family. As to quaternary structure, homohexamer. Mg(2+) is required as a cofactor.

The protein resides in the cytoplasm. The catalysed reaction is (R)-4'-phosphopantetheine + ATP + H(+) = 3'-dephospho-CoA + diphosphate. It participates in cofactor biosynthesis; coenzyme A biosynthesis; CoA from (R)-pantothenate: step 4/5. Reversibly transfers an adenylyl group from ATP to 4'-phosphopantetheine, yielding dephospho-CoA (dPCoA) and pyrophosphate. The chain is Phosphopantetheine adenylyltransferase from Nitrobacter winogradskyi (strain ATCC 25391 / DSM 10237 / CIP 104748 / NCIMB 11846 / Nb-255).